We begin with the raw amino-acid sequence, 418 residues long: UDP-N-acetylglucosamine 1-carboxyvinyltransferase (418 aa).

22–23 provides a ligand contact to phosphoenolpyruvate; that stretch reads KN. R93 lines the UDP-N-acetyl-alpha-D-glucosamine pocket. The active-site Proton donor is C117. 2-(S-cysteinyl)pyruvic acid O-phosphothioketal is present on C117. D305 and V327 together coordinate UDP-N-acetyl-alpha-D-glucosamine.

The protein belongs to the EPSP synthase family. MurA subfamily.

It localises to the cytoplasm. The enzyme catalyses phosphoenolpyruvate + UDP-N-acetyl-alpha-D-glucosamine = UDP-N-acetyl-3-O-(1-carboxyvinyl)-alpha-D-glucosamine + phosphate. Its pathway is cell wall biogenesis; peptidoglycan biosynthesis. Its function is as follows. Cell wall formation. Adds enolpyruvyl to UDP-N-acetylglucosamine. The sequence is that of UDP-N-acetylglucosamine 1-carboxyvinyltransferase from Alkalilimnicola ehrlichii (strain ATCC BAA-1101 / DSM 17681 / MLHE-1).